The chain runs to 130 residues: UPF0102 protein AHA_3896 (130 aa).

The protein belongs to the UPF0102 family.

This Aeromonas hydrophila subsp. hydrophila (strain ATCC 7966 / DSM 30187 / BCRC 13018 / CCUG 14551 / JCM 1027 / KCTC 2358 / NCIMB 9240 / NCTC 8049) protein is UPF0102 protein AHA_3896.